The following is a 181-amino-acid chain: Major urinary protein 20 (181 aa).

The signal sequence occupies residues 1-19 (MKLLVLLLCLGLTLVCVHA). Cysteine 83 and cysteine 176 are oxidised to a cystine.

The protein belongs to the calycin superfamily. Lipocalin family. Detected in urine of males but absent from female urine (at protein level).

Its subcellular location is the secreted. Its function is as follows. Male pheromone which stimulates female sexual attraction to male urinary scent and promotes a strong learned attraction to the airborne urinary odor of an individual male. Promotes spatial learning by rapidly conditioning preference for its remembered location among females and competitor males so that animals prefer to spend time in the site even when scent is absent. In addition to promoting a rapid attraction response, also elicits ultrasonic vocalizations and urinary scent marking in females which do not occur immediately after exposure. Stimulates hippocampal neurogenesis and cell proliferation in the subventricular zone in females. Promotes male aggressive behavior. Response to Mup20 is mediated by a neural circuit extending from the accessory olfactory bulb to a subset of nitric oxidase synthase-expressing neurons in the medial amygdala. As well as acting as a pheromone itself, binds most of the male pheromone, 2-sec-butyl-4,5-dihydrothiazole, in urine and is responsible for its slow release from scent marks. The polypeptide is Major urinary protein 20 (Mus musculus (Mouse)).